The primary structure comprises 496 residues: Glycerol kinase (496 aa).

T12 contacts ADP. The ATP site is built by T12, T13, and S14. Residue T12 participates in sn-glycerol 3-phosphate binding. R16 serves as a coordination point for ADP. Sn-glycerol 3-phosphate is bound by residues R82, E83, and Y134. Residues R82, E83, and Y134 each coordinate glycerol. Residue H230 is modified to Phosphohistidine; by HPr. D244 lines the sn-glycerol 3-phosphate pocket. Glycerol is bound by residues D244 and Q245. ADP-binding residues include T266 and G309. The ATP site is built by T266, G309, Q313, and G410. Residues G410 and N414 each contribute to the ADP site.

It belongs to the FGGY kinase family. As to quaternary structure, homotetramer and homodimer (in equilibrium). Post-translationally, the phosphoenolpyruvate-dependent sugar phosphotransferase system (PTS), including enzyme I, and histidine-containing protein (HPr) are required for the phosphorylation, which leads to the activation of the enzyme.

The enzyme catalyses glycerol + ATP = sn-glycerol 3-phosphate + ADP + H(+). The protein operates within polyol metabolism; glycerol degradation via glycerol kinase pathway; sn-glycerol 3-phosphate from glycerol: step 1/1. Its activity is regulated as follows. Activated by phosphorylation and inhibited by fructose 1,6-bisphosphate (FBP). Its function is as follows. Key enzyme in the regulation of glycerol uptake and metabolism. Catalyzes the phosphorylation of glycerol to yield sn-glycerol 3-phosphate. This is Glycerol kinase from Bacillus cytotoxicus (strain DSM 22905 / CIP 110041 / 391-98 / NVH 391-98).